A 180-amino-acid polypeptide reads, in one-letter code: NADH-quinone oxidoreductase subunit I (180 aa).

4Fe-4S ferredoxin-type domains lie at 48–80 (IVLT…LQKS) and 90–119 (EFFR…LTPD). C60, C63, C66, C70, C99, C102, C105, and C109 together coordinate [4Fe-4S] cluster. Basic and acidic residues predominate over residues 161–174 (KPKGDAENEAKPID). The interval 161–180 (KPKGDAENEAKPIDVKSLLP) is disordered.

Belongs to the complex I 23 kDa subunit family. In terms of assembly, NDH-1 is composed of 14 different subunits. Subunits NuoA, H, J, K, L, M, N constitute the membrane sector of the complex. Requires [4Fe-4S] cluster as cofactor.

The protein localises to the cell inner membrane. It carries out the reaction a quinone + NADH + 5 H(+)(in) = a quinol + NAD(+) + 4 H(+)(out). Functionally, NDH-1 shuttles electrons from NADH, via FMN and iron-sulfur (Fe-S) centers, to quinones in the respiratory chain. The immediate electron acceptor for the enzyme in this species is believed to be ubiquinone. Couples the redox reaction to proton translocation (for every two electrons transferred, four hydrogen ions are translocated across the cytoplasmic membrane), and thus conserves the redox energy in a proton gradient. The protein is NADH-quinone oxidoreductase subunit I of Aeromonas hydrophila subsp. hydrophila (strain ATCC 7966 / DSM 30187 / BCRC 13018 / CCUG 14551 / JCM 1027 / KCTC 2358 / NCIMB 9240 / NCTC 8049).